Consider the following 86-residue polypeptide: Large ribosomal subunit protein bL31B (86 aa).

The protein belongs to the bacterial ribosomal protein bL31 family. Type B subfamily. As to quaternary structure, part of the 50S ribosomal subunit.

The sequence is that of Large ribosomal subunit protein bL31B from Yersinia pseudotuberculosis serotype O:1b (strain IP 31758).